Consider the following 51-residue polypeptide: Small, acid-soluble spore protein K (51 aa).

Positions 1–51 are disordered; that stretch reads MRNKAKGFPNPISFNGNKANNADEHASKRPDGTTRDRPQERMRSSNHFNSL. A compositionally biased stretch (basic and acidic residues) spans 21-43; sequence NADEHASKRPDGTTRDRPQERMR.

The protein belongs to the SspK family.

Its subcellular location is the spore core. In Shouchella clausii (strain KSM-K16) (Alkalihalobacillus clausii), this protein is Small, acid-soluble spore protein K.